We begin with the raw amino-acid sequence, 238 residues long: Transcription termination/antitermination protein NusG (238 aa).

Belongs to the NusG family.

In terms of biological role, participates in transcription elongation, termination and antitermination. The sequence is that of Transcription termination/antitermination protein NusG from Mycobacterium tuberculosis (strain CDC 1551 / Oshkosh).